A 562-amino-acid polypeptide reads, in one-letter code: Apyrase (562 aa).

The first 24 residues, 1 to 24 (MAGRPGYSEVIFLYVVSVAVIARA), serve as a signal peptide directing secretion. A divalent metal cation is bound by residues Asp47, His49, and Asp98. Asn112 carries an N-linked (GlcNAc...) asparagine glycan. Residues Asn130, His233, and His257 each contribute to the a divalent metal cation site. Arg370 contacts AMP. An N-linked (GlcNAc...) asparagine glycan is attached at Asn390. Positions 405, 424, and 514 each coordinate AMP.

Belongs to the 5'-nucleotidase family. In terms of assembly, (Microbial infection) Interacts with Zika virus envelope protein E and Zika virus-like particles; the interaction does not affect Zika virus replication in human endothelial cells and keratinocytes. A divalent metal cation is required as a cofactor. Post-translationally, the N-terminus is blocked. Female saliva (at protein level). Female salivary gland (at protein level). Not detected or low-level expression in female carcasses without salivary glands. Not detected in male tissues.

The protein localises to the secreted. It carries out the reaction a ribonucleoside 5'-triphosphate + 2 H2O = a ribonucleoside 5'-phosphate + 2 phosphate + 2 H(+). Its function is as follows. Facilitates hematophagy by preventing ADP-, collagen- and thrombin-dependent platelet aggregation in the host. Cleaves adenosine triphosphate (ATP) and adenosine diphosphate (ADP) to adenosine monophosphate (AMP) and inorganic phosphate. May reduce probing time by facilitating the speed of locating blood. In terms of biological role, (Microbial infection) Does not affect Zika virus replication in human endothelial cells and keratinocytes. The protein is Apyrase of Aedes aegypti (Yellowfever mosquito).